Reading from the N-terminus, the 391-residue chain is Succinate--CoA ligase [ADP-forming] subunit beta (391 aa).

The region spanning 9–237 (RDLFEKHGVP…RATTDPLELR (229 aa)) is the ATP-grasp domain. ATP contacts are provided by residues K46, 53-55 (GRG), A95, and E100. Mg(2+)-binding residues include N192 and D206. Residues N257 and 320 to 322 (GIT) contribute to the substrate site.

Belongs to the succinate/malate CoA ligase beta subunit family. Heterotetramer of two alpha and two beta subunits. Mg(2+) serves as cofactor.

The enzyme catalyses succinate + ATP + CoA = succinyl-CoA + ADP + phosphate. The catalysed reaction is GTP + succinate + CoA = succinyl-CoA + GDP + phosphate. The protein operates within carbohydrate metabolism; tricarboxylic acid cycle; succinate from succinyl-CoA (ligase route): step 1/1. In terms of biological role, succinyl-CoA synthetase functions in the citric acid cycle (TCA), coupling the hydrolysis of succinyl-CoA to the synthesis of either ATP or GTP and thus represents the only step of substrate-level phosphorylation in the TCA. The beta subunit provides nucleotide specificity of the enzyme and binds the substrate succinate, while the binding sites for coenzyme A and phosphate are found in the alpha subunit. This chain is Succinate--CoA ligase [ADP-forming] subunit beta, found in Cutibacterium acnes (strain DSM 16379 / KPA171202) (Propionibacterium acnes).